Reading from the N-terminus, the 71-residue chain is Sec-independent protein translocase protein TatA (71 aa).

A helical membrane pass occupies residues 1–21 (MGSFSLLHWLVVLVIVLLVFG). A disordered region spans residues 43–71 (LHEDDKPTDQLGSTSQSTASGPQQDHGKH). A compositionally biased stretch (polar residues) spans 52-65 (QLGSTSQSTASGPQ).

Belongs to the TatA/E family. The Tat system comprises two distinct complexes: a TatABC complex, containing multiple copies of TatA, TatB and TatC subunits, and a separate TatA complex, containing only TatA subunits. Substrates initially bind to the TatABC complex, which probably triggers association of the separate TatA complex to form the active translocon.

It localises to the cell inner membrane. In terms of biological role, part of the twin-arginine translocation (Tat) system that transports large folded proteins containing a characteristic twin-arginine motif in their signal peptide across membranes. TatA could form the protein-conducting channel of the Tat system. The protein is Sec-independent protein translocase protein TatA of Xylella fastidiosa (strain M12).